Reading from the N-terminus, the 404-residue chain is Riboflavin biosynthesis protein RibBA (404 aa).

The DHBP synthase stretch occupies residues 1 to 204; that stretch reads MEELKLNTIE…IRDLIAYRLK (204 aa). Residues 30 to 31, D35, 143 to 147, and E167 each bind D-ribulose 5-phosphate; these read RE and RAGHT. E31 is a Mg(2+) binding site. Residue H146 coordinates Mg(2+). The interval 205–404 is GTP cyclohydrolase II; it reads QESLVEKGVE…RMGHTLHFNK (200 aa). Residue 255 to 259 participates in GTP binding; that stretch reads RVHSS. C260, C271, and C273 together coordinate Zn(2+). Residues Q276, 298 to 300, and T320 contribute to the GTP site; that span reads EGR. The Proton acceptor; for GTP cyclohydrolase activity role is filled by D332. Residue R334 is the Nucleophile; for GTP cyclohydrolase activity of the active site. T355 and K360 together coordinate GTP.

This sequence in the N-terminal section; belongs to the DHBP synthase family. It in the C-terminal section; belongs to the GTP cyclohydrolase II family. Requires Mg(2+) as cofactor. It depends on Mn(2+) as a cofactor. Zn(2+) is required as a cofactor.

It catalyses the reaction D-ribulose 5-phosphate = (2S)-2-hydroxy-3-oxobutyl phosphate + formate + H(+). It carries out the reaction GTP + 4 H2O = 2,5-diamino-6-hydroxy-4-(5-phosphoribosylamino)-pyrimidine + formate + 2 phosphate + 3 H(+). The protein operates within cofactor biosynthesis; riboflavin biosynthesis; 2-hydroxy-3-oxobutyl phosphate from D-ribulose 5-phosphate: step 1/1. It functions in the pathway cofactor biosynthesis; riboflavin biosynthesis; 5-amino-6-(D-ribitylamino)uracil from GTP: step 1/4. Catalyzes the conversion of D-ribulose 5-phosphate to formate and 3,4-dihydroxy-2-butanone 4-phosphate. Functionally, catalyzes the conversion of GTP to 2,5-diamino-6-ribosylamino-4(3H)-pyrimidinone 5'-phosphate (DARP), formate and pyrophosphate. This is Riboflavin biosynthesis protein RibBA from Phocaeicola vulgatus (strain ATCC 8482 / DSM 1447 / JCM 5826 / CCUG 4940 / NBRC 14291 / NCTC 11154) (Bacteroides vulgatus).